A 229-amino-acid polypeptide reads, in one-letter code: N-acetyltransferase MPR1 (229 aa).

An N-acetyltransferase domain is found at 65–219 (FNLEIESGKT…DAIIYGKDLT (155 aa)). Asn-135 contacts substrate. 145–150 (RGQKVG) is a CoA binding site. A substrate-binding site is contributed by 172–173 (NL).

It belongs to the acetyltransferase family. As to quaternary structure, homodimer. In terms of processing, not glycosylated.

It localises to the cytoplasm. Its subcellular location is the mitochondrion. It carries out the reaction L-glutamate 5-semialdehyde + acetyl-CoA = N-acetyl-L-glutamate 5-semialdehyde + CoA + H(+). In terms of biological role, N-acetyltransferase involved in oxidative stress resistance. Acetylates the toxic proline metabolism intermediate (S)-1-pyrroline-5-carboxylate (P5C), or more likely its spontaneously forming tautomer glutamate-5-semialdehyde (GSA) into N-acetyl-GSA for arginine synthesis in the mitochondria. P5C has been shown to increase the levels of reactive oxygen species (ROS) in the cell by inhibiting the function of the respiratory chain in the mitochondria. The enzyme is able to reduce intracellular ROS levels under P5C-induced oxidative stress and protects cells from damage by oxidative stress. Also acetylates and thereby detoxifies the proline analog azetidine-2-carboxylate (AZC), however it is unlikely that AZC is a natural substrate as it occurs only in plants belonging to the Lilaceae family. Does not acetylate proline. This chain is N-acetyltransferase MPR1, found in Saccharomyces cerevisiae (Baker's yeast).